The chain runs to 171 residues: Ribosome maturation factor RimM (171 aa).

The region spanning 97–170 (KLNYFSWDHY…IIYMKLPVGL (74 aa)) is the PRC barrel domain.

The protein belongs to the RimM family. In terms of assembly, binds ribosomal protein uS19.

The protein localises to the cytoplasm. Its function is as follows. An accessory protein needed during the final step in the assembly of 30S ribosomal subunit, possibly for assembly of the head region. Essential for efficient processing of 16S rRNA. May be needed both before and after RbfA during the maturation of 16S rRNA. It has affinity for free ribosomal 30S subunits but not for 70S ribosomes. In Azobacteroides pseudotrichonymphae genomovar. CFP2, this protein is Ribosome maturation factor RimM.